Reading from the N-terminus, the 828-residue chain is Periplasmic nitrate reductase (828 aa).

Residues methionine 1–alanine 31 constitute a signal peptide (tat-type signal). Residues isoleucine 39 to aspartate 95 form the 4Fe-4S Mo/W bis-MGD-type domain. 4 residues coordinate [4Fe-4S] cluster: cysteine 46, cysteine 49, cysteine 53, and cysteine 81. Mo-bis(molybdopterin guanine dinucleotide) contacts are provided by residues lysine 83, glutamine 150, asparagine 175, cysteine 179, tryptophan 212–methionine 219, serine 243–histidine 247, glutamine 262–aspartate 264, methionine 372, glutamine 376, asparagine 482, serine 508–aspartate 509, lysine 531, aspartate 558, and threonine 718–threonine 727. Phenylalanine 794 contacts substrate. The Mo-bis(molybdopterin guanine dinucleotide) site is built by asparagine 802 and lysine 819.

Belongs to the prokaryotic molybdopterin-containing oxidoreductase family. NasA/NapA/NarB subfamily. As to quaternary structure, component of the periplasmic nitrate reductase NapAB complex composed of NapA and NapB. Requires [4Fe-4S] cluster as cofactor. It depends on Mo-bis(molybdopterin guanine dinucleotide) as a cofactor. Predicted to be exported by the Tat system. The position of the signal peptide cleavage has not been experimentally proven.

The protein localises to the periplasm. The enzyme catalyses 2 Fe(II)-[cytochrome] + nitrate + 2 H(+) = 2 Fe(III)-[cytochrome] + nitrite + H2O. Functionally, catalytic subunit of the periplasmic nitrate reductase complex NapAB. Receives electrons from NapB and catalyzes the reduction of nitrate to nitrite. The chain is Periplasmic nitrate reductase from Citrobacter koseri (strain ATCC BAA-895 / CDC 4225-83 / SGSC4696).